A 221-amino-acid polypeptide reads, in one-letter code: uncharacterized protein (221 aa).

Residues 1–11 (MGEKSRRKGPA) are compositionally biased toward basic residues. 2 disordered regions span residues 1-23 (MGEK…GRTC) and 139-169 (SNFQ…SAPE). Composition is skewed to basic and acidic residues over residues 13 to 23 (RHADGKLGRTC) and 155 to 168 (DKRS…RSAP).

This is an uncharacterized protein from Homo sapiens (Human).